Here is a 145-residue protein sequence, read N- to C-terminus: Protein SprT-like (145 aa).

The region spanning 4 to 141 is the SprT-like domain; the sequence is TDYVKEVSRQ…CGNCHGKLRH (138 aa). Position 64 (histidine 64) interacts with Zn(2+). Glutamate 65 is an active-site residue. Histidine 68 contacts Zn(2+).

This sequence belongs to the SprT family. Requires Zn(2+) as cofactor.

Its subcellular location is the cytoplasm. This is Protein SprT-like from Streptococcus mutans serotype c (strain ATCC 700610 / UA159).